Reading from the N-terminus, the 456-residue chain is Chitobiosyldiphosphodolichol beta-mannosyltransferase (456 aa).

Residues 1 to 22 lie on the Lumenal side of the membrane; that stretch reads MGEIIKYKGFDHVWQYSGPWLY. The helical transmembrane segment at 23–43 threads the bilayer; it reads CLIGIYISLPVLAYHILPWIF. The Cytoplasmic segment spans residues 44–103; the sequence is HKNRSNKRKTISIFVLGDLGHSPRMCYHASSFSKLDYYVNLCGYVETEPSHQIVDDVNID. An intramembrane region (helical) is located at residues 104–124; sequence IIPIEAIKNTNNLPYIMFAIL. The Cytoplasmic segment spans residues 125–456; that stretch reads KVVRQCGKIW…TFSSIFENKS (332 aa).

The protein belongs to the glycosyltransferase group 1 family.

The protein localises to the endoplasmic reticulum membrane. It catalyses the reaction an N,N'-diacetylchitobiosyl-diphospho-di-trans,poly-cis-dolichol + GDP-alpha-D-mannose = a beta-D-Man-(1-&gt;4)-beta-D-GlcNAc-(1-&gt;4)-alpha-D-GlcNAc-diphospho-di-trans,poly-cis-dolichol + GDP + H(+). It participates in protein modification; protein glycosylation. Participates in the formation of the lipid-linked precursor oligosaccharide for N-glycosylation. Involved in assembling the dolichol-pyrophosphate-GlcNAc(2)-Man(5) intermediate on the cytoplasmic surface of the ER. This chain is Chitobiosyldiphosphodolichol beta-mannosyltransferase (ALG1), found in Candida albicans (strain SC5314 / ATCC MYA-2876) (Yeast).